Reading from the N-terminus, the 140-residue chain is Large ribosomal subunit protein uL11 (140 aa).

Belongs to the universal ribosomal protein uL11 family. Part of the ribosomal stalk of the 50S ribosomal subunit. Interacts with L10 and the large rRNA to form the base of the stalk. L10 forms an elongated spine to which L12 dimers bind in a sequential fashion forming a multimeric L10(L12)X complex. In terms of processing, one or more lysine residues are methylated.

Functionally, forms part of the ribosomal stalk which helps the ribosome interact with GTP-bound translation factors. The protein is Large ribosomal subunit protein uL11 of Enterococcus faecalis (strain ATCC 700802 / V583).